Reading from the N-terminus, the 1413-residue chain is DNA-directed RNA polymerase subunit beta' (1413 aa).

Residues Cys-70, Cys-72, Cys-85, and Cys-88 each coordinate Zn(2+). Residues Asp-460, Asp-462, and Asp-464 each coordinate Mg(2+). Cys-819, Cys-893, Cys-900, and Cys-903 together coordinate Zn(2+). The segment at 1393–1413 (EAFEFGTPETPAAEQTPHTNE) is disordered.

It belongs to the RNA polymerase beta' chain family. As to quaternary structure, the RNAP catalytic core consists of 2 alpha, 1 beta, 1 beta' and 1 omega subunit. When a sigma factor is associated with the core the holoenzyme is formed, which can initiate transcription. Mg(2+) serves as cofactor. Requires Zn(2+) as cofactor.

It catalyses the reaction RNA(n) + a ribonucleoside 5'-triphosphate = RNA(n+1) + diphosphate. Functionally, DNA-dependent RNA polymerase catalyzes the transcription of DNA into RNA using the four ribonucleoside triphosphates as substrates. The protein is DNA-directed RNA polymerase subunit beta' of Paraburkholderia phymatum (strain DSM 17167 / CIP 108236 / LMG 21445 / STM815) (Burkholderia phymatum).